The sequence spans 283 residues: UPF0276 protein Nmul_A2550 (283 aa).

It belongs to the UPF0276 family.

The chain is UPF0276 protein Nmul_A2550 from Nitrosospira multiformis (strain ATCC 25196 / NCIMB 11849 / C 71).